The primary structure comprises 634 residues: tRNA uridine 5-carboxymethylaminomethyl modification enzyme MnmG (634 aa).

14–19 (GGGHAG) provides a ligand contact to FAD. NAD(+) is bound at residue 279–293 (GPRYCPSIEDKVVRF).

This sequence belongs to the MnmG family. As to quaternary structure, homodimer. Heterotetramer of two MnmE and two MnmG subunits. It depends on FAD as a cofactor.

Its subcellular location is the cytoplasm. Its function is as follows. NAD-binding protein involved in the addition of a carboxymethylaminomethyl (cmnm) group at the wobble position (U34) of certain tRNAs, forming tRNA-cmnm(5)s(2)U34. This is tRNA uridine 5-carboxymethylaminomethyl modification enzyme MnmG from Xanthomonas axonopodis pv. citri (strain 306).